The primary structure comprises 1502 residues: Ras guanine nucleotide exchange factor P (1502 aa).

In terms of domain architecture, Calponin-homology (CH) spans Phe-84 to Glu-187. Disordered regions lie at residues Ala-216 to Glu-242, Gln-325 to Asn-436, Glu-456 to Gly-534, and Thr-589 to Asn-935. Composition is skewed to low complexity over residues Ser-218 to Glu-242, Gln-325 to Thr-345, Thr-371 to His-400, and Ser-407 to Thr-421. Positions Gln-287–Gln-328 form a coiled coil. Residues Pro-422–Asn-436 show a composition bias toward polar residues. Residues Glu-451–Lys-515 adopt a coiled-coil conformation. Over residues Asn-458 to Asn-508 the composition is skewed to low complexity. A compositionally biased stretch (pro residues) spans His-518 to Pro-528. 5 stretches are compositionally biased toward low complexity: residues Thr-589 to Asn-646, Thr-663 to Ile-675, Ser-686 to Pro-719, Asn-764 to Ser-790, and Asn-813 to Asn-853. The segment covering Leu-861 to Asn-876 has biased composition (polar residues). Low complexity predominate over residues Thr-883–Asn-935. Residues Val-1032–Gln-1076 are a coiled coil. One can recognise an N-terminal Ras-GEF domain in the interval Gly-1102–Pro-1249. The Ras-GEF domain maps to Asp-1267–Arg-1498.

Promotes the exchange of Ras-bound GDP by GTP. The chain is Ras guanine nucleotide exchange factor P (gefP) from Dictyostelium discoideum (Social amoeba).